We begin with the raw amino-acid sequence, 351 residues long: Dihydroorotate dehydrogenase (quinone) (351 aa).

Residues 61 to 65 and Thr-85 each bind FMN; that span reads AGLDK. Lys-65 is a substrate binding site. 110 to 114 contributes to the substrate binding site; it reads NRMGF. Positions 139 and 172 each coordinate FMN. Residue Asn-172 coordinates substrate. Residue Ser-175 is the Nucleophile of the active site. Asn-177 is a binding site for substrate. Positions 217 and 245 each coordinate FMN. 246–247 is a binding site for substrate; it reads NT. Residues Gly-268, Gly-297, and 318–319 contribute to the FMN site; that span reads YT.

The protein belongs to the dihydroorotate dehydrogenase family. Type 2 subfamily. In terms of assembly, monomer. FMN is required as a cofactor.

The protein resides in the cell membrane. The catalysed reaction is (S)-dihydroorotate + a quinone = orotate + a quinol. It functions in the pathway pyrimidine metabolism; UMP biosynthesis via de novo pathway; orotate from (S)-dihydroorotate (quinone route): step 1/1. Functionally, catalyzes the conversion of dihydroorotate to orotate with quinone as electron acceptor. This chain is Dihydroorotate dehydrogenase (quinone), found in Xylella fastidiosa (strain 9a5c).